A 108-amino-acid polypeptide reads, in one-letter code: V-type proton ATPase subunit G (108 aa).

Over residues 48-60 the composition is skewed to basic and acidic residues; that stretch reads YASKKEEEFKKSE. The interval 48–89 is disordered; the sequence is YASKKEEEFKKSESQASGIYSQAEAESKKQVQDTFASIETSS. Over residues 79–89 the composition is skewed to polar residues; the sequence is QDTFASIETSS.

It belongs to the V-ATPase G subunit family. V-ATPase is a heteromultimeric enzyme composed of a peripheral catalytic V1 complex (components A to H) attached to an integral membrane V0 proton pore complex (components: a, c, c', c'', d, e, f and VOA1).

It localises to the vacuole membrane. In terms of biological role, subunit of the V1 complex of vacuolar(H+)-ATPase (V-ATPase), a multisubunit enzyme composed of a peripheral complex (V1) that hydrolyzes ATP and a membrane integral complex (V0) that translocates protons. V-ATPase is responsible for acidifying and maintaining the pH of intracellular compartments. This Schizosaccharomyces pombe (strain 972 / ATCC 24843) (Fission yeast) protein is V-type proton ATPase subunit G (vma10).